Reading from the N-terminus, the 98-residue chain is Large ribosomal subunit protein uL23c (98 aa).

It belongs to the universal ribosomal protein uL23 family. Part of the 50S ribosomal subunit.

The protein localises to the plastid. Its subcellular location is the chloroplast. Its function is as follows. Binds to 23S rRNA. The sequence is that of Large ribosomal subunit protein uL23c (rpl23) from Thalassiosira pseudonana (Marine diatom).